A 550-amino-acid chain; its full sequence is Arginine--tRNA ligase (550 aa).

The short motif at 130–140 is the 'HIGH' region element; the sequence is ANPTGPIHLGG.

This sequence belongs to the class-I aminoacyl-tRNA synthetase family. As to quaternary structure, monomer.

The protein localises to the cytoplasm. It carries out the reaction tRNA(Arg) + L-arginine + ATP = L-arginyl-tRNA(Arg) + AMP + diphosphate. This Rhodococcus erythropolis (strain PR4 / NBRC 100887) protein is Arginine--tRNA ligase.